The following is a 91-amino-acid chain: Large ribosomal subunit protein bL27 (91 aa).

Residues 1 to 21 are disordered; it reads MAHKKSGGSSRNGRDSAGRRL.

The protein belongs to the bacterial ribosomal protein bL27 family.

This chain is Large ribosomal subunit protein bL27, found in Phenylobacterium zucineum (strain HLK1).